We begin with the raw amino-acid sequence, 425 residues long: 3-phosphoshikimate 1-carboxyvinyltransferase (425 aa).

Residues lysine 21, serine 22, and arginine 26 each contribute to the 3-phosphoshikimate site. Residue lysine 21 participates in phosphoenolpyruvate binding. Residues glycine 91 and arginine 119 each contribute to the phosphoenolpyruvate site. Serine 164, glutamine 166, aspartate 311, and lysine 338 together coordinate 3-phosphoshikimate. Position 166 (glutamine 166) interacts with phosphoenolpyruvate. Aspartate 311 (proton acceptor) is an active-site residue. Phosphoenolpyruvate contacts are provided by arginine 342 and arginine 383.

It belongs to the EPSP synthase family. In terms of assembly, monomer.

It is found in the cytoplasm. It catalyses the reaction 3-phosphoshikimate + phosphoenolpyruvate = 5-O-(1-carboxyvinyl)-3-phosphoshikimate + phosphate. Its pathway is metabolic intermediate biosynthesis; chorismate biosynthesis; chorismate from D-erythrose 4-phosphate and phosphoenolpyruvate: step 6/7. Its function is as follows. Catalyzes the transfer of the enolpyruvyl moiety of phosphoenolpyruvate (PEP) to the 5-hydroxyl of shikimate-3-phosphate (S3P) to produce enolpyruvyl shikimate-3-phosphate and inorganic phosphate. This chain is 3-phosphoshikimate 1-carboxyvinyltransferase, found in Campylobacter fetus subsp. fetus (strain 82-40).